An 80-amino-acid chain; its full sequence is DNA-binding protein HU-like (80 aa).

Belongs to the bacterial histone-like protein family.

Functionally, histone-like DNA-binding protein which is capable of wrapping DNA to stabilize it, and thus to prevent its denaturation under extreme environmental conditions. This chain is DNA-binding protein HU-like, found in Rickettsia prowazekii (strain Madrid E).